The following is a 95-amino-acid chain: Histone-like DNA-binding protein (95 aa).

Belongs to the bacterial histone-like protein family.

This Rickettsia conorii (strain ATCC VR-613 / Malish 7) protein is Histone-like DNA-binding protein.